A 524-amino-acid chain; its full sequence is Cytochrome P450 704B1 (524 aa).

Residues 2–22 traverse the membrane as a helical segment; it reads SLCLVIACMVTSWIFLHRWGQ. A heme-binding site is contributed by C471.

It belongs to the cytochrome P450 family. Requires heme as cofactor.

Its subcellular location is the membrane. The enzyme catalyses an omega-methyl-long-chain fatty acid + reduced [NADPH--hemoprotein reductase] + O2 = an omega-hydroxy-long-chain fatty acid + oxidized [NADPH--hemoprotein reductase] + H2O + H(+). Functionally, involved in pollen wall development. Catalyzes the conversion of long-chain fatty acids to the corresponding omega-hydroxylated fatty acids. Omega-hydroxylated fatty acids, together with in-chain hydroxylated fatty acids, are key monomeric aliphatic building blocks for sporopollenin synthesis during exine formation. The protein is Cytochrome P450 704B1 (CYP704B1) of Arabidopsis thaliana (Mouse-ear cress).